We begin with the raw amino-acid sequence, 209 residues long: Kynurenine formamidase (209 aa).

W20 provides a ligand contact to substrate. Residues H50, H54, and D56 each coordinate Zn(2+). The Proton donor/acceptor role is filled by H60. Residues H161 and E173 each coordinate Zn(2+).

This sequence belongs to the Cyclase 1 superfamily. KynB family. Homodimer. Zn(2+) is required as a cofactor.

The enzyme catalyses N-formyl-L-kynurenine + H2O = L-kynurenine + formate + H(+). It participates in amino-acid degradation; L-tryptophan degradation via kynurenine pathway; L-kynurenine from L-tryptophan: step 2/2. In terms of biological role, catalyzes the hydrolysis of N-formyl-L-kynurenine to L-kynurenine, the second step in the kynurenine pathway of tryptophan degradation. The polypeptide is Kynurenine formamidase (Bacillus anthracis).